The following is a 377-amino-acid chain: Histone deacetylase 8 (377 aa).

Residues 14–324 form a histone deacetylase region; that stretch reads LPPVYIYSPE…WTYLTGVILG (311 aa). Position 39 is a phosphoserine (Ser-39). Asp-101 serves as a coordination point for substrate. The Proton acceptor role is filled by His-143. Residue Gly-151 participates in substrate binding. 3 residues coordinate a divalent metal cation: Asp-178, His-180, and Asp-267. Tyr-306 provides a ligand contact to substrate.

The protein belongs to the histone deacetylase family. HD type 1 subfamily. In terms of assembly, interacts with CBFA2T3. Interacts with phosphorylated SMG5/EST1B; this interaction protects SMG5 from ubiquitin-mediated degradation. Associates with alpha-SMA (smooth muscle alpha-actin). The cofactor is a divalent metal cation. Phosphorylated by PKA on serine 39. Phosphorylation reduces deacetylase activity observed preferentially on histones H3 and H4.

Its subcellular location is the nucleus. The protein localises to the chromosome. It is found in the cytoplasm. The enzyme catalyses N(6)-acetyl-L-lysyl-[histone] + H2O = L-lysyl-[histone] + acetate. The catalysed reaction is N(6)-acetyl-L-lysyl-[protein] + H2O = L-lysyl-[protein] + acetate. It carries out the reaction N(6)-(2E)-butenoyl-L-lysyl-[protein] + H2O = (2E)-2-butenoate + L-lysyl-[protein]. Its activity is regulated as follows. Its activity is inhibited by trichostatin A (TSA) and butyrate, 2 well known histone deacetylase inhibitors. Functionally, histone deacetylase that catalyzes the deacetylation of lysine residues on the N-terminal part of the core histones (H2A, H2B, H3 and H4). Histone deacetylation gives a tag for epigenetic repression and plays an important role in transcriptional regulation, cell cycle progression and developmental events. Histone deacetylases act via the formation of large multiprotein complexes. Also involved in the deacetylation of cohesin complex protein SMC3 regulating release of cohesin complexes from chromatin. May play a role in smooth muscle cell contractility. In addition to protein deacetylase activity, also has protein-lysine deacylase activity: acts as a protein decrotonylase by mediating decrotonylation ((2E)-butenoyl) of histones. In Bos taurus (Bovine), this protein is Histone deacetylase 8 (HDAC8).